Here is a 146-residue protein sequence, read N- to C-terminus: Large ribosomal subunit protein uL13 (146 aa).

The protein belongs to the universal ribosomal protein uL13 family. As to quaternary structure, part of the 50S ribosomal subunit.

This protein is one of the early assembly proteins of the 50S ribosomal subunit, although it is not seen to bind rRNA by itself. It is important during the early stages of 50S assembly. This is Large ribosomal subunit protein uL13 from Mycoplasma pneumoniae (strain ATCC 29342 / M129 / Subtype 1) (Mycoplasmoides pneumoniae).